A 164-amino-acid polypeptide reads, in one-letter code: Putative 4-hydroxy-4-methyl-2-oxoglutarate aldolase (164 aa).

Residues 74–77 (GGNL) and arginine 96 contribute to the substrate site. Aspartate 97 contacts a divalent metal cation.

Belongs to the class II aldolase/RraA-like family. Homotrimer. The cofactor is a divalent metal cation.

It catalyses the reaction 4-hydroxy-4-methyl-2-oxoglutarate = 2 pyruvate. The catalysed reaction is oxaloacetate + H(+) = pyruvate + CO2. Its function is as follows. Catalyzes the aldol cleavage of 4-hydroxy-4-methyl-2-oxoglutarate (HMG) into 2 molecules of pyruvate. Also contains a secondary oxaloacetate (OAA) decarboxylase activity due to the common pyruvate enolate transition state formed following C-C bond cleavage in the retro-aldol and decarboxylation reactions. This Thermus thermophilus (strain ATCC BAA-163 / DSM 7039 / HB27) protein is Putative 4-hydroxy-4-methyl-2-oxoglutarate aldolase.